A 469-amino-acid polypeptide reads, in one-letter code: 3-isopropylmalate dehydratase large subunit (469 aa).

[4Fe-4S] cluster contacts are provided by Cys-349, Cys-410, and Cys-413.

Belongs to the aconitase/IPM isomerase family. LeuC type 1 subfamily. In terms of assembly, heterodimer of LeuC and LeuD. Requires [4Fe-4S] cluster as cofactor.

It catalyses the reaction (2R,3S)-3-isopropylmalate = (2S)-2-isopropylmalate. Its pathway is amino-acid biosynthesis; L-leucine biosynthesis; L-leucine from 3-methyl-2-oxobutanoate: step 2/4. In terms of biological role, catalyzes the isomerization between 2-isopropylmalate and 3-isopropylmalate, via the formation of 2-isopropylmaleate. The polypeptide is 3-isopropylmalate dehydratase large subunit (Neisseria meningitidis serogroup B (strain ATCC BAA-335 / MC58)).